Reading from the N-terminus, the 208-residue chain is Imidazoleglycerol-phosphate dehydratase (208 aa).

It belongs to the imidazoleglycerol-phosphate dehydratase family.

Its subcellular location is the cytoplasm. It carries out the reaction D-erythro-1-(imidazol-4-yl)glycerol 3-phosphate = 3-(imidazol-4-yl)-2-oxopropyl phosphate + H2O. The protein operates within amino-acid biosynthesis; L-histidine biosynthesis; L-histidine from 5-phospho-alpha-D-ribose 1-diphosphate: step 6/9. This chain is Imidazoleglycerol-phosphate dehydratase, found in Prochlorococcus marinus (strain MIT 9211).